We begin with the raw amino-acid sequence, 178 residues long: Cytochrome b6-f complex iron-sulfur subunit (178 aa).

Residues 20-42 (LLTFGTATGVALGALYPVANYFM) traverse the membrane as a helical segment. The region spanning 65-161 (KTGWLASHQA…VDVDDDAVLV (97 aa)) is the Rieske domain. [2Fe-2S] cluster is bound by residues C107, H109, C125, and H128. A disulfide bond links C112 and C127.

The protein belongs to the Rieske iron-sulfur protein family. The 4 large subunits of the cytochrome b6-f complex are cytochrome b6, subunit IV (17 kDa polypeptide, PetD), cytochrome f and the Rieske protein, while the 4 small subunits are PetG, PetL, PetM and PetN. The complex functions as a dimer. The cofactor is [2Fe-2S] cluster.

It is found in the cellular thylakoid membrane. It carries out the reaction 2 oxidized [plastocyanin] + a plastoquinol + 2 H(+)(in) = 2 reduced [plastocyanin] + a plastoquinone + 4 H(+)(out). Its function is as follows. Component of the cytochrome b6-f complex, which mediates electron transfer between photosystem II (PSII) and photosystem I (PSI), cyclic electron flow around PSI, and state transitions. The sequence is that of Cytochrome b6-f complex iron-sulfur subunit from Prochlorococcus marinus subsp. pastoris (strain CCMP1986 / NIES-2087 / MED4).